The sequence spans 127 residues: Small ribosomal subunit protein uS13 (127 aa).

Residues 95–127 (GLPVHGQRTSTNARTRKGPRRAAVKKKGGAKKK) form a disordered region. The segment covering 108-127 (RTRKGPRRAAVKKKGGAKKK) has biased composition (basic residues).

The protein belongs to the universal ribosomal protein uS13 family. As to quaternary structure, part of the 30S ribosomal subunit. Forms a loose heterodimer with protein S19. Forms two bridges to the 50S subunit in the 70S ribosome.

Its function is as follows. Located at the top of the head of the 30S subunit, it contacts several helices of the 16S rRNA. In the 70S ribosome it contacts the 23S rRNA (bridge B1a) and protein L5 of the 50S subunit (bridge B1b), connecting the 2 subunits; these bridges are implicated in subunit movement. Contacts the tRNAs in the A and P-sites. The polypeptide is Small ribosomal subunit protein uS13 (Desulfatibacillum aliphaticivorans).